The following is a 341-amino-acid chain: tRNA N6-adenosine threonylcarbamoyltransferase (341 aa).

Residues histidine 111 and histidine 115 each contribute to the Fe cation site. Residues 134-138, aspartate 167, glycine 180, and asparagine 272 each bind substrate; that span reads LVSGG. Aspartate 300 lines the Fe cation pocket.

It belongs to the KAE1 / TsaD family. Requires Fe(2+) as cofactor.

The protein resides in the cytoplasm. The enzyme catalyses L-threonylcarbamoyladenylate + adenosine(37) in tRNA = N(6)-L-threonylcarbamoyladenosine(37) in tRNA + AMP + H(+). Required for the formation of a threonylcarbamoyl group on adenosine at position 37 (t(6)A37) in tRNAs that read codons beginning with adenine. Is involved in the transfer of the threonylcarbamoyl moiety of threonylcarbamoyl-AMP (TC-AMP) to the N6 group of A37, together with TsaE and TsaB. TsaD likely plays a direct catalytic role in this reaction. The chain is tRNA N6-adenosine threonylcarbamoyltransferase from Psychromonas ingrahamii (strain DSM 17664 / CCUG 51855 / 37).